A 1028-amino-acid chain; its full sequence is Protein SMAX1-LIKE 5 (1028 aa).

The 192-residue stretch at 8–199 folds into the Clp R domain; that stretch reads IQQTLTTEAA…CVEDCSVSSV (192 aa). Repeat stretches follow at residues 12–102 and 116–199; these read LTTE…LNRL and LANA…VSSV. Positions 871 to 875 match the EAR motif; that stretch reads LDLNI.

The protein belongs to the ClpA/ClpB family. In terms of assembly, interacts probably with TPL/TPR in an EAR-motif dependent manner. As to expression, detected in roots, seedlings and axillary branches.

Its function is as follows. May function in a transcriptional corepressor complex. This is Protein SMAX1-LIKE 5 from Arabidopsis thaliana (Mouse-ear cress).